A 281-amino-acid polypeptide reads, in one-letter code: Pseudouridine-5'-phosphate glycosidase (281 aa).

Glu9 functions as the Proton donor in the catalytic mechanism. Positions 69 and 89 each coordinate substrate. Position 118 (Asp118) interacts with Mn(2+). Residue Ser120 to Asp122 participates in substrate binding. Residue Lys139 is the Nucleophile of the active site.

Belongs to the pseudouridine-5'-phosphate glycosidase family. Homotrimer. The cofactor is Mn(2+).

It catalyses the reaction D-ribose 5-phosphate + uracil = psi-UMP + H2O. Catalyzes the reversible cleavage of pseudouridine 5'-phosphate (PsiMP) to ribose 5-phosphate and uracil. Functions biologically in the cleavage direction, as part of a pseudouridine degradation pathway. In Thermus thermophilus (strain ATCC BAA-163 / DSM 7039 / HB27), this protein is Pseudouridine-5'-phosphate glycosidase.